The primary structure comprises 439 residues: Adenylosuccinate synthetase (439 aa).

GTP is bound by residues 25-31 (GDEGKGK), 53-55 (GHT), and lysine 62. Aspartate 26 functions as the Proton acceptor in the catalytic mechanism. Residues aspartate 26 and glycine 53 each coordinate Mg(2+). Residues 26-29 (DEGK) and 51-54 (NAGH) contribute to the IMP site. The Proton donor role is filled by histidine 54. Residues threonine 141, arginine 155, asparagine 232, and threonine 247 each coordinate IMP. Threonine 307 provides a ligand contact to GTP. 307–313 (TTTNRPR) contributes to the substrate binding site. Arginine 311 is an IMP binding site. Residues arginine 313, 339–341 (KLD), and 425–427 (GVG) contribute to the GTP site.

This sequence belongs to the adenylosuccinate synthetase family. As to quaternary structure, homodimer. Mg(2+) is required as a cofactor.

The protein resides in the cytoplasm. The enzyme catalyses IMP + L-aspartate + GTP = N(6)-(1,2-dicarboxyethyl)-AMP + GDP + phosphate + 2 H(+). Its pathway is purine metabolism; AMP biosynthesis via de novo pathway; AMP from IMP: step 1/2. Functionally, plays an important role in the salvage pathway for purine nucleotide biosynthesis. Catalyzes the first commited step in the biosynthesis of AMP from IMP. This Plasmodium chabaudi chabaudi protein is Adenylosuccinate synthetase.